The sequence spans 239 residues: NAD(P)H-quinone oxidoreductase subunit K, chloroplastic (239 aa).

4 residues coordinate [4Fe-4S] cluster: C43, C44, C108, and C139. Residues 217 to 239 (KSSVSSRELGNESGKEDVSIQNK) form a disordered region. The span at 225–239 (LGNESGKEDVSIQNK) shows a compositional bias: basic and acidic residues.

The protein belongs to the complex I 20 kDa subunit family. In terms of assembly, NDH is composed of at least 16 different subunits, 5 of which are encoded in the nucleus. [4Fe-4S] cluster is required as a cofactor.

It is found in the plastid. The protein resides in the chloroplast thylakoid membrane. It carries out the reaction a plastoquinone + NADH + (n+1) H(+)(in) = a plastoquinol + NAD(+) + n H(+)(out). The catalysed reaction is a plastoquinone + NADPH + (n+1) H(+)(in) = a plastoquinol + NADP(+) + n H(+)(out). Its function is as follows. NDH shuttles electrons from NAD(P)H:plastoquinone, via FMN and iron-sulfur (Fe-S) centers, to quinones in the photosynthetic chain and possibly in a chloroplast respiratory chain. The immediate electron acceptor for the enzyme in this species is believed to be plastoquinone. Couples the redox reaction to proton translocation, and thus conserves the redox energy in a proton gradient. This is NAD(P)H-quinone oxidoreductase subunit K, chloroplastic from Acorus calamus var. americanus (American sweet flag).